We begin with the raw amino-acid sequence, 333 residues long: Fe-S cluster assembly protein dre2 (333 aa).

The interval 1–29 (MSPITLDLTSDFNPANTTGAGSSSSQPRT) is disordered. The span at 7–28 (DLTSDFNPANTTGAGSSSSQPR) shows a compositional bias: polar residues. The N-terminal SAM-like domain stretch occupies residues 23 to 158 (SSSQPRTLLV…KPDYAEEEAV (136 aa)). Positions 159–225 (PLRFGLKRKT…EDTLLTEADL (67 aa)) are linker. Residues cysteine 235, cysteine 246, cysteine 249, and cysteine 251 each coordinate [2Fe-2S] cluster. The tract at residues 235–251 (CQPKPGKKRRACKDCTC) is fe-S binding site A. [4Fe-4S] cluster-binding residues include cysteine 296, cysteine 299, cysteine 307, and cysteine 310. 2 short sequence motifs (cx2C motif) span residues 296 to 299 (CGSC) and 307 to 310 (CAGC). The segment at 296 to 310 (CGSCALGDAFRCAGC) is fe-S binding site B.

It belongs to the anamorsin family. Monomer. Interacts with tah18. Interacts with mia40. [2Fe-2S] cluster is required as a cofactor. [4Fe-4S] cluster serves as cofactor.

Its subcellular location is the cytoplasm. It localises to the mitochondrion intermembrane space. Functionally, component of the cytosolic iron-sulfur (Fe-S) protein assembly (CIA) machinery required for the maturation of extramitochondrial Fe-S proteins. Part of an electron transfer chain functioning in an early step of cytosolic Fe-S biogenesis, facilitating the de novo assembly of a [4Fe-4S] cluster on the scaffold complex cfd1-nbp35. Electrons are transferred to dre2 from NADPH via the FAD- and FMN-containing protein tah18. Tah18-dre2 are also required for the assembly of the diferric tyrosyl radical cofactor of ribonucleotide reductase (RNR), probably by providing electrons for reduction during radical cofactor maturation in the catalytic small subunit rnr2. The protein is Fe-S cluster assembly protein dre2 of Neurospora crassa (strain ATCC 24698 / 74-OR23-1A / CBS 708.71 / DSM 1257 / FGSC 987).